The primary structure comprises 462 residues: ATP synthase subunit beta (462 aa).

151–158 (GGAGVGKT) is an ATP binding site.

The protein belongs to the ATPase alpha/beta chains family. As to quaternary structure, F-type ATPases have 2 components, CF(1) - the catalytic core - and CF(0) - the membrane proton channel. CF(1) has five subunits: alpha(3), beta(3), gamma(1), delta(1), epsilon(1). CF(0) has four main subunits: a(1), b(1), b'(1) and c(9-12).

It localises to the cell inner membrane. It carries out the reaction ATP + H2O + 4 H(+)(in) = ADP + phosphate + 5 H(+)(out). In terms of biological role, produces ATP from ADP in the presence of a proton gradient across the membrane. The catalytic sites are hosted primarily by the beta subunits. This Chlorobium phaeobacteroides (strain BS1) protein is ATP synthase subunit beta.